The chain runs to 303 residues: Terpene synthase (303 aa).

Mg(2+) is bound by residues Asp-69 and Asp-73. Positions 69–73 (DDIQD) match the DDXXD motif motif.

This sequence belongs to the FPP/GGPP synthase family. Requires Mg(2+) as cofactor.

It catalyses the reaction (2E)-geranyl diphosphate + H2O = (2E)-geraniol + diphosphate. Its function is as follows. Terpene synthase that is able to convert geraniol diphosphate to geraniol in tea leaves. The sequence is that of Terpene synthase from Matsumurasca onukii (Tea green leafhopper).